We begin with the raw amino-acid sequence, 262 residues long: Small ribosomal subunit protein eS4C (262 aa).

An S4 RNA-binding domain is found at 42–105; it reads LPLIVFLRNR…GEHFRLVYDI (64 aa). At Thr-194 the chain carries Phosphothreonine.

Belongs to the eukaryotic ribosomal protein eS4 family. Component of the small ribosomal subunit (SSU). Mature yeast ribosomes consist of a small (40S) and a large (60S) subunit. The 40S small subunit contains 1 molecule of ribosomal RNA (18S rRNA) and at least 33 different proteins. The large 60S subunit contains 3 rRNA molecules (25S, 5.8S and 5S rRNA) and at least 46 different proteins.

The protein resides in the cytoplasm. In terms of biological role, component of the ribosome, a large ribonucleoprotein complex responsible for the synthesis of proteins in the cell. The small ribosomal subunit (SSU) binds messenger RNAs (mRNAs) and translates the encoded message by selecting cognate aminoacyl-transfer RNA (tRNA) molecules. The large subunit (LSU) contains the ribosomal catalytic site termed the peptidyl transferase center (PTC), which catalyzes the formation of peptide bonds, thereby polymerizing the amino acids delivered by tRNAs into a polypeptide chain. The nascent polypeptides leave the ribosome through a tunnel in the LSU and interact with protein factors that function in enzymatic processing, targeting, and the membrane insertion of nascent chains at the exit of the ribosomal tunnel. This is Small ribosomal subunit protein eS4C (rps403) from Schizosaccharomyces pombe (strain 972 / ATCC 24843) (Fission yeast).